Consider the following 114-residue polypeptide: Probable prefoldin subunit 2 (114 aa).

This sequence belongs to the prefoldin subunit beta family. Heterohexamer of two PFD-alpha type and four PFD-beta type subunits.

Functionally, binds specifically to cytosolic chaperonin (c-CPN) and transfers target proteins to it. Binds to nascent polypeptide chain and promotes folding in an environment in which there are many competing pathways for nonnative proteins. This chain is Probable prefoldin subunit 2, found in Schizosaccharomyces pombe (strain 972 / ATCC 24843) (Fission yeast).